We begin with the raw amino-acid sequence, 155 residues long: Small ribosomal subunit protein uS7cz/uS7cy (155 aa).

This sequence belongs to the universal ribosomal protein uS7 family. As to quaternary structure, part of the 30S ribosomal subunit.

It localises to the plastid. Functionally, one of the primary rRNA binding proteins, it binds directly to 16S rRNA where it nucleates assembly of the head domain of the 30S subunit. This chain is Small ribosomal subunit protein uS7cz/uS7cy (rps7-A), found in Cuscuta obtusiflora (Peruvian dodder).